The chain runs to 358 residues: Membrane-bound lytic murein transglycosylase C (358 aa).

The first 16 residues, 1–16 (MKKILALLVIAPLLVS), serve as a signal peptide directing secretion. Cys-17 carries the N-palmitoyl cysteine lipid modification. Cys-17 carries S-diacylglycerol cysteine lipidation.

The protein belongs to the transglycosylase Slt family.

The protein localises to the cell outer membrane. The enzyme catalyses Exolytic cleavage of the (1-&gt;4)-beta-glycosidic linkage between N-acetylmuramic acid (MurNAc) and N-acetylglucosamine (GlcNAc) residues in peptidoglycan, from either the reducing or the non-reducing ends of the peptidoglycan chains, with concomitant formation of a 1,6-anhydrobond in the MurNAc residue.. Its function is as follows. Murein-degrading enzyme. May play a role in recycling of muropeptides during cell elongation and/or cell division. This is Membrane-bound lytic murein transglycosylase C from Yersinia enterocolitica serotype O:8 / biotype 1B (strain NCTC 13174 / 8081).